The primary structure comprises 814 residues: Transcription activator of gluconeogenesis PADG_03802 (814 aa).

The disordered stretch occupies residues 1–90 (MTSSARNGSP…SAKDPLRPRR (90 aa)). The span at 69–83 (STSSTAASANNASAK) shows a compositional bias: low complexity. A DNA-binding region (zn(2)-C6 fungal-type) is located at residues 97-125 (CFACQRAHLTCGDERPCQRCIKRGLQDTC). Disordered stretches follow at residues 164–208 (NTNS…TNNY), 236–287 (SAFQ…PTFF), 323–384 (AGDT…SRNI), 442–461 (PPTNTQHQQQPQPPRISTPS), 598–617 (TGGSSSSGVSSRGSSTYNSR), and 695–739 (SAAG…ATNV). Over residues 171–188 (NGTNSNSDNNSTNTNSNN) the composition is skewed to low complexity. 4 stretches are compositionally biased toward polar residues: residues 189–208 (KPSHQDVSTNFFSTPSTNNY), 248–279 (FDLSSNPQNHTLSPSMAQNSGTTPSSSASQNP), 339–359 (GRSSGTFTVQNFGEGSSNQSP), and 375–384 (GQGQTNSRNI). Over residues 442–451 (PPTNTQHQQQ) the composition is skewed to low complexity. The segment covering 720–739 (GTTSAVNGVSNGSGNNATNV) has biased composition (low complexity).

This sequence belongs to the ERT1/acuK family.

The protein localises to the nucleus. Functionally, transcription factor which regulates nonfermentable carbon utilization. Activator of gluconeogenetic genes. This is Transcription activator of gluconeogenesis PADG_03802 from Paracoccidioides brasiliensis (strain Pb18).